A 240-amino-acid polypeptide reads, in one-letter code: Uridylate kinase (240 aa).

12–15 (KLSG) serves as a coordination point for ATP. Positions 20–25 (GEKGFG) are involved in allosteric activation by GTP. Residue Gly54 participates in UMP binding. Residues Gly55 and Arg59 each coordinate ATP. UMP contacts are provided by residues Asp74 and 135–142 (TGSPYFST). Asn163, Tyr169, and Asp172 together coordinate ATP.

It belongs to the UMP kinase family. In terms of assembly, homohexamer.

It localises to the cytoplasm. It carries out the reaction UMP + ATP = UDP + ADP. The protein operates within pyrimidine metabolism; CTP biosynthesis via de novo pathway; UDP from UMP (UMPK route): step 1/1. Its activity is regulated as follows. Allosterically activated by GTP. Inhibited by UTP. Functionally, catalyzes the reversible phosphorylation of UMP to UDP. The sequence is that of Uridylate kinase from Limosilactobacillus reuteri (Lactobacillus reuteri).